The sequence spans 192 residues: Inosine triphosphate pyrophosphatase (192 aa).

11 to 16 (TGNKNK) is a binding site for ITP. Glu-41 contacts Mg(2+). ITP is bound by residues Lys-53, 69 to 70 (DT), Lys-86, 146 to 149 (FGWD), Lys-169, and 174 to 175 (HR).

It belongs to the HAM1 NTPase family. In terms of assembly, homodimer. The cofactor is Mg(2+). It depends on Mn(2+) as a cofactor.

The protein resides in the cytoplasm. It carries out the reaction ITP + H2O = IMP + diphosphate + H(+). It catalyses the reaction dITP + H2O = dIMP + diphosphate + H(+). The enzyme catalyses XTP + H2O = XMP + diphosphate + H(+). Its function is as follows. Pyrophosphatase that hydrolyzes non-canonical purine nucleotides such as inosine triphosphate (ITP), deoxyinosine triphosphate (dITP) or xanthosine 5'-triphosphate (XTP) to their respective monophosphate derivatives. The enzyme does not distinguish between the deoxy- and ribose forms. Probably excludes non-canonical purines from RNA and DNA precursor pools, thus preventing their incorporation into RNA and DNA and avoiding chromosomal lesions. This is Inosine triphosphate pyrophosphatase from Ciona intestinalis (Transparent sea squirt).